The chain runs to 597 residues: Elongation factor 4 (597 aa).

The tr-type G domain occupies 2-184 (DHIRNFSIIA…ALIAKVPPPK (183 aa)). GTP-binding positions include 14–19 (DHGKST) and 131–134 (NKID).

Belongs to the TRAFAC class translation factor GTPase superfamily. Classic translation factor GTPase family. LepA subfamily.

The protein resides in the cell inner membrane. It carries out the reaction GTP + H2O = GDP + phosphate + H(+). Required for accurate and efficient protein synthesis under certain stress conditions. May act as a fidelity factor of the translation reaction, by catalyzing a one-codon backward translocation of tRNAs on improperly translocated ribosomes. Back-translocation proceeds from a post-translocation (POST) complex to a pre-translocation (PRE) complex, thus giving elongation factor G a second chance to translocate the tRNAs correctly. Binds to ribosomes in a GTP-dependent manner. This is Elongation factor 4 from Cupriavidus taiwanensis (strain DSM 17343 / BCRC 17206 / CCUG 44338 / CIP 107171 / LMG 19424 / R1) (Ralstonia taiwanensis (strain LMG 19424)).